A 242-amino-acid polypeptide reads, in one-letter code: tRNA pseudouridine synthase A (242 aa).

D51 (nucleophile) is an active-site residue. Y107 contacts substrate.

The protein belongs to the tRNA pseudouridine synthase TruA family. In terms of assembly, homodimer.

It carries out the reaction uridine(38/39/40) in tRNA = pseudouridine(38/39/40) in tRNA. In terms of biological role, formation of pseudouridine at positions 38, 39 and 40 in the anticodon stem and loop of transfer RNAs. In Helicobacter pylori (strain Shi470), this protein is tRNA pseudouridine synthase A.